A 108-amino-acid polypeptide reads, in one-letter code: Replication initiation control protein YabA (108 aa).

Residues histidine 82, cysteine 84, cysteine 98, and cysteine 101 each coordinate Zn(2+).

The protein belongs to the YabA family. In terms of assembly, homotetramer. Interacts with both DnaA and DnaN, acting as a bridge between these two proteins. Zn(2+) serves as cofactor.

The protein localises to the cytoplasm. The protein resides in the nucleoid. Functionally, involved in control of chromosome replication initiation. Inhibits the cooperative binding of DnaA to the oriC region, thus negatively regulating initiation of chromosome replication. Inhibits the ability of DnaA-ATP to form a helix on DNA; does not disassemble preformed DnaA-DNA helices. Decreases the residence time of DnaA on the chromosome at its binding sites (oriC, replication forks and promoter-binding sites). Tethers DnaA to the replication machinery via the DNA polymerase beta sliding clamp subunit (dnaN). Associates with oriC and other DnaA targets on the chromosome in a DnaA-dependent manner. This Streptococcus agalactiae serotype Ia (strain ATCC 27591 / A909 / CDC SS700) protein is Replication initiation control protein YabA.